Consider the following 225-residue polypeptide: Uracil-DNA glycosylase (225 aa).

Asp65 functions as the Proton acceptor in the catalytic mechanism.

It belongs to the uracil-DNA glycosylase (UDG) superfamily. UNG family.

The protein localises to the cytoplasm. The enzyme catalyses Hydrolyzes single-stranded DNA or mismatched double-stranded DNA and polynucleotides, releasing free uracil.. Its function is as follows. Excises uracil residues from the DNA which can arise as a result of misincorporation of dUMP residues by DNA polymerase or due to deamination of cytosine. This is Uracil-DNA glycosylase from Clostridium perfringens (strain SM101 / Type A).